Consider the following 64-residue polypeptide: Alpha-like toxin Lqh6 (64 aa).

Residues 2 to 63 form the LCN-type CS-alpha/beta domain; that stretch reads RDGYIAQPEN…GIIVDGVKCH (62 aa). Intrachain disulfides connect Cys-12–Cys-62, Cys-16–Cys-34, Cys-20–Cys-44, and Cys-24–Cys-46. Lys-64 carries the lysine amide modification.

This sequence belongs to the long (4 C-C) scorpion toxin superfamily. Sodium channel inhibitor family. Alpha subfamily. As to expression, expressed by the venom gland.

It is found in the secreted. In terms of biological role, alpha toxins bind voltage-independently at site-3 of sodium channels (Nav) and inhibit the inactivation of the activated channels, thereby blocking neuronal transmission. This toxin is highly toxic to insects and mice, and inhibits the binding of alpha-toxin to cockroach neuronal membranes. The chain is Alpha-like toxin Lqh6 from Leiurus hebraeus (Hebrew deathstalker scorpion).